Here is a 970-residue protein sequence, read N- to C-terminus: GEM-interacting protein (970 aa).

Phosphoserine is present on Ser19. 3 disordered regions span residues 44-76 (PLLSEDPEPDKTPTATVTNEASCWSGPSPEGPV), 224-263 (SEDLRARSQGSPEDSAPQASPGPSKQQERRRRSREEAQAK), and 377-478 (PLDI…ENGL). Polar residues predominate over residues 56–65 (PTATVTNEAS). Phosphoserine occurs at positions 71, 231, 234, 243, 437, and 441. The 264-residue stretch at 81-344 (EELDLRLIRT…CCAPFEPGQR (264 aa)) folds into the F-BAR domain. Residues 231-246 (SQGSPEDSAPQASPGP) are compositionally biased toward polar residues. Acidic residues predominate over residues 459–472 (SSDDFEERDPDLGD). The segment at 493 to 537 (THQLRRLRGPAKCRECEAFMVSGTECEECFLTCHKRCLETLLILC) adopts a Phorbol-ester/DAG-type zinc-finger fold. In terms of domain architecture, Rho-GAP spans 554–757 (LQLPRDFPEE…FLIVHYEQIF (204 aa)). The residue at position 660 (Thr660) is a Phosphothreonine. A disordered region spans residues 762 to 878 (LPQATEPPPQ…PVKYPRGGVR (117 aa)). The segment covering 766-778 (TEPPPQDSSPAPG) has biased composition (pro residues). Positions 815 to 830 (EQHPTATPTEIPTPQS) are enriched in polar residues. Basic and acidic residues predominate over residues 831–844 (DQREDVAEDTKDGG). Residues 847–863 (VSSQGPEDSLLGTQSRG) show a composition bias toward polar residues. Phosphoserine is present on residues Ser885, Ser907, Ser914, Ser919, and Ser923. Residues 897-932 (ETPITSVPRGSLRGRGPSPAAASPEGSPLRRTPLPK) are disordered. Over residues 910-923 (GRGPSPAAASPEGS) the composition is skewed to low complexity.

Interacts with GEM through its N-terminal.

Stimulates, in vitro and in vivo, the GTPase activity of RhoA. The chain is GEM-interacting protein (GMIP) from Homo sapiens (Human).